The following is a 525-amino-acid chain: GMP synthase [glutamine-hydrolyzing] (525 aa).

A Glutamine amidotransferase type-1 domain is found at 9–207 (RILILDFGSQ…VRDICQCEAL (199 aa)). C86 functions as the Nucleophile in the catalytic mechanism. Residues H181 and E183 contribute to the active site. Residues 208–400 (WTPAKIIDDA…LGLPYDMLYR (193 aa)) form the GMPS ATP-PPase domain. Residue 235–241 (SGGVDSS) participates in ATP binding.

In terms of assembly, homodimer.

The enzyme catalyses XMP + L-glutamine + ATP + H2O = GMP + L-glutamate + AMP + diphosphate + 2 H(+). It functions in the pathway purine metabolism; GMP biosynthesis; GMP from XMP (L-Gln route): step 1/1. Its function is as follows. Catalyzes the synthesis of GMP from XMP. This Escherichia coli (strain K12 / MC4100 / BW2952) protein is GMP synthase [glutamine-hydrolyzing].